Here is a 754-residue protein sequence, read N- to C-terminus: uncharacterized protein (754 aa).

Residues Ser585 and His707 each act as charge relay system in the active site. The tract at residues 733 to 754 is disordered; the sequence is SHAPPPSRKARSAARRSTDPVR.

It belongs to the peptidase S9A family.

This is an uncharacterized protein from Sinorhizobium fredii (strain NBRC 101917 / NGR234).